We begin with the raw amino-acid sequence, 253 residues long: 1-(5-phosphoribosyl)-5-[(5-phosphoribosylamino)methylideneamino] imidazole-4-carboxamide isomerase (253 aa).

Asp8 acts as the Proton acceptor in catalysis. The active-site Proton donor is the Asp131.

The protein belongs to the HisA/HisF family.

The protein localises to the cytoplasm. It catalyses the reaction 1-(5-phospho-beta-D-ribosyl)-5-[(5-phospho-beta-D-ribosylamino)methylideneamino]imidazole-4-carboxamide = 5-[(5-phospho-1-deoxy-D-ribulos-1-ylimino)methylamino]-1-(5-phospho-beta-D-ribosyl)imidazole-4-carboxamide. It participates in amino-acid biosynthesis; L-histidine biosynthesis; L-histidine from 5-phospho-alpha-D-ribose 1-diphosphate: step 4/9. The protein is 1-(5-phosphoribosyl)-5-[(5-phosphoribosylamino)methylideneamino] imidazole-4-carboxamide isomerase of Polynucleobacter necessarius subsp. necessarius (strain STIR1).